The primary structure comprises 680 residues: DNA-directed RNA polymerase subunit beta' (680 aa).

Zn(2+)-binding residues include Cys69, Cys71, Cys87, and Cys90. Residues Asp489, Asp491, and Asp493 each contribute to the Mg(2+) site.

The protein belongs to the RNA polymerase beta' chain family. RpoC1 subfamily. In plastids the minimal PEP RNA polymerase catalytic core is composed of four subunits: alpha, beta, beta', and beta''. When a (nuclear-encoded) sigma factor is associated with the core the holoenzyme is formed, which can initiate transcription. Requires Mg(2+) as cofactor. Zn(2+) is required as a cofactor.

It localises to the plastid. Its subcellular location is the chloroplast. The catalysed reaction is RNA(n) + a ribonucleoside 5'-triphosphate = RNA(n+1) + diphosphate. In terms of biological role, DNA-dependent RNA polymerase catalyzes the transcription of DNA into RNA using the four ribonucleoside triphosphates as substrates. The protein is DNA-directed RNA polymerase subunit beta' of Arabidopsis thaliana (Mouse-ear cress).